Here is a 953-residue protein sequence, read N- to C-terminus: Protein ENHANCER OF LHP1 1 (953 aa).

WD repeat units follow at residues 15–55 (GGSA…TLPP), 60–99 (HHQD…FQTN), 102–143 (RFTL…RVLK), 144–183 (GHKG…VSFT), 192–232 (GFNT…KLFA), 236–275 (DHLE…DIDR), and 277–316 (KFEE…SMLS). Disordered regions lie at residues 347–370 (SESL…RKRL), 385–419 (EELN…GAFK), and 851–877 (ESKV…SATK). Over residues 349-359 (SLDDAMGDSDD) the composition is skewed to acidic residues. Polar residues predominate over residues 853–877 (KVQNPPASIQTSENTEAVMKSSATK). A Nuclear localization signal motif is present at residues 900-907 (TKKDKSDD). Positions 919–953 (KNPVNNVNKEDKGQEKEVNQGEARRSSNPFLKSTV) are disordered. The segment covering 926–943 (NKEDKGQEKEVNQGEARR) has biased composition (basic and acidic residues). The span at 944–953 (SSNPFLKSTV) shows a compositional bias: polar residues.

In terms of assembly, interacts with EZA1/SWN, LHP1, SLD5 and CLF in the nucleus. In terms of tissue distribution, expressed in root meristematic zones, initiating lateral roots, young leaves and the shoot apex.

It is found in the nucleus. In terms of biological role, participates in maintaining the H3K27me3 mark at target genes by interacting with LHP1-PRC2 complexes during replication, thus contributing to H3K27me3 inheritance. In Arabidopsis thaliana (Mouse-ear cress), this protein is Protein ENHANCER OF LHP1 1.